Consider the following 243-residue polypeptide: Probable transcriptional regulatory protein Patl_0550 (243 aa).

This sequence belongs to the TACO1 family.

The protein resides in the cytoplasm. The protein is Probable transcriptional regulatory protein Patl_0550 of Pseudoalteromonas atlantica (strain T6c / ATCC BAA-1087).